The primary structure comprises 61 residues: MSSYRCPVCEYVYDESKGAPREGFPAGTPWDAVPDDWCCPDCGVREKLDFEPMPATAGSES.

The region spanning 1-53 is the Rubredoxin-like domain; that stretch reads MSSYRCPVCEYVYDESKGAPREGFPAGTPWDAVPDDWCCPDCGVREKLDFEPM. Cys6, Cys9, Cys39, and Cys42 together coordinate Fe cation.

This sequence belongs to the rubredoxin family. It depends on Fe(3+) as a cofactor.

Involved in the hydrocarbon hydroxylating system, which transfers electrons from NADH to rubredoxin reductase and then through rubredoxin to alkane 1 monooxygenase. This Rhodococcus erythropolis (Arthrobacter picolinophilus) protein is Rubredoxin 3 (rubA3).